The sequence spans 124 residues: Large ribosomal subunit protein bL12c (124 aa).

This sequence belongs to the bacterial ribosomal protein bL12 family. Homodimer. Part of the ribosomal stalk of the 50S ribosomal subunit. Forms a multimeric L10(L12)X complex, where L10 forms an elongated spine to which 2 to 4 L12 dimers bind in a sequential fashion. Binds GTP-bound translation factors.

It is found in the plastid. The protein localises to the chloroplast. Functionally, forms part of the ribosomal stalk which helps the ribosome interact with GTP-bound translation factors. Is thus essential for accurate translation. The polypeptide is Large ribosomal subunit protein bL12c (Cyanidioschyzon merolae (strain NIES-3377 / 10D) (Unicellular red alga)).